Here is a 260-residue protein sequence, read N- to C-terminus: Thrombin-like enzyme bhalternin (260 aa).

The N-terminal stretch at 1–18 (MVLIRVLANLLILQLSYA) is a signal peptide. A propeptide spanning residues 19–24 (QKASEL) is cleaved from the precursor. Residues 25–251 (VIGGDECNIN…YSEWIQSIIA (227 aa)) form the Peptidase S1 domain. Disulfide bonds link C31/C165, C50/C66, C144/C212, C176/C191, and C202/C227. N-linked (GlcNAc...) asparagine glycosylation is present at N44. N81 carries N-linked (GlcNAc...) asparagine glycosylation.

It belongs to the peptidase S1 family. Snake venom subfamily. As to quaternary structure, monomer. As to expression, expressed by the venom gland.

The protein localises to the secreted. Its activity is regulated as follows. Inhibited by benzamidine and partially inhibited by EDTA. Its function is as follows. Thrombin-like snake venom serine protease that induces blood clotting in vitro, defibrinogenation in vivo (by intraperitoneal injection into mice), albuminolytic and fibrinogenolytic activities. Preferentially cleaves the alpha chain of fibrinogen (FGA). Causes hemolysis in the heart, causes apparent hyperemia and lymphocytic interstitial pneumonitis in the lung, causes necrosis and inflammatory infiltrate in the liver, and causes glomerular congestion in the kidney. Also provokes a drastic myonecrosis. The chain is Thrombin-like enzyme bhalternin from Bothrops alternatus (Urutu).